Reading from the N-terminus, the 642-residue chain is Influenza virus NS1A-binding protein homolog (642 aa).

The BTB domain maps to Cys-32–Lys-99. The region spanning Cys-134–Asp-233 is the BACK domain. 5 positions are modified to phosphoserine: Ser-246, Ser-277, Ser-322, Ser-336, and Ser-338. The segment at Lys-257–Ser-281 is disordered. Residues Lys-265–Ser-281 are compositionally biased toward polar residues. Kelch repeat units follow at residues Lys-369–Gly-415, Gln-416–Gly-463, Leu-465–Gly-512, Tyr-513–Gly-559, Leu-561–Asn-606, and Ile-608–Phe-642.

Belongs to the BTB-kelch protein family. As to quaternary structure, homodimer; through the BTB domain. Interacts with AHR/Aryl hydrocarbon receptor. Interacts (via BACK domain) with pre-mRNA-binding protein HNRNPK; the interaction is direct. Interacts (via BACK domain) with splicing factor PTBP1; the interaction is direct. Interacts (via Kelch repeats) with RNA polymerase POLR2A (via C-terminal domain). Interacts (via BACK domain) with splicing factor SNRPA; the interaction is indirect. Interacts (via Kelch repeats) with splicing factor SART1. Interacts (via BACK domain) with ALYREF; the interaction is indirect and likely plays a role in mRNA nuclear export. Interacts (via Kelch repeats) with KLHL20 (via Kelch repeats); this interaction blocks the assembly of Cul3-KLHL20 complex. In terms of tissue distribution, ubiquitous expression. In the heart, the highest expression is detected in the ventricles and the lowest in the atria. Expressed in dendrites and spines in neurons.

The protein localises to the cytoplasm. Its subcellular location is the cytoskeleton. The protein resides in the nucleus. Involved in many cell functions, including pre-mRNA splicing, the aryl hydrocarbon receptor (AHR) pathway, F-actin organization and protein ubiquitination. Plays a role in the dynamic organization of the actin skeleton as a stabilizer of actin filaments by association with F-actin through Kelch repeats. Protects cells from cell death induced by actin destabilization. Functions as a modifier of the AHR/Aryl hydrocarbon receptor pathway increasing the concentration of AHR available to activate transcription. In addition, functions as a negative regulator of BCR(KLHL20) E3 ubiquitin ligase complex to prevent ubiquitin-mediated proteolysis of PML and DAPK1, two tumor suppressors. Inhibits pre-mRNA splicing (in vitro). May play a role in mRNA nuclear export. Functionally, may play a role in cell cycle progression in the nucleus. This chain is Influenza virus NS1A-binding protein homolog, found in Mus musculus (Mouse).